The following is a 63-amino-acid chain: Large ribosomal subunit protein bL32 (63 aa).

2 disordered regions span residues methionine 1 to proline 25 and valine 42 to aspartate 63. The span at lysine 7–isoleucine 20 shows a compositional bias: basic residues. Positions alanine 54–aspartate 63 are enriched in polar residues.

The protein belongs to the bacterial ribosomal protein bL32 family.

The polypeptide is Large ribosomal subunit protein bL32 (Lactobacillus johnsonii (strain CNCM I-12250 / La1 / NCC 533)).